The chain runs to 991 residues: Translation initiation factor IF-2 (991 aa).

Disordered stretches follow at residues 58–82 (EGKKITLTRRQTSEIRQADATGRSR) and 106–405 (QARA…PAPQ). A compositionally biased stretch (low complexity) spans 106 to 164 (QARADAAASDAAPAEPAPAAAEPSASAPVTAPVNAPAADAPQAPATAAPDTAAPAAETP). The segment covering 165-175 (SQPPAVEPQPA) has biased composition (pro residues). 3 stretches are compositionally biased toward low complexity: residues 190-206 (AKPAEAPAEPAAPAAVE), 221-258 (AVQAEIETAPAPAAESAQAARPEPVTPKAEPAPAASKP), and 267-276 (APVPVAAPAV). Positions 279-289 (AGREEARRAAE) are enriched in basic and acidic residues. Over residues 379–388 (RAGGKGGKGG) the composition is skewed to gly residues. The segment covering 395–405 (QAERRHEPAPQ) has biased composition (basic and acidic residues). One can recognise a tr-type G domain in the interval 492–659 (PRAPVVTVMG…NVLLQAEILE (168 aa)). Residues 501–508 (GHVDHGKT) form a G1 region. Position 501–508 (501–508 (GHVDHGKT)) interacts with GTP. Residues 526–530 (GITQH) are G2. The tract at residues 547–550 (DTPG) is G3. Residues 547–551 (DTPGH) and 601–604 (NKID) each bind GTP. Positions 601–604 (NKID) are G4. The tract at residues 637–639 (SAK) is G5.

It belongs to the TRAFAC class translation factor GTPase superfamily. Classic translation factor GTPase family. IF-2 subfamily.

The protein localises to the cytoplasm. Its function is as follows. One of the essential components for the initiation of protein synthesis. Protects formylmethionyl-tRNA from spontaneous hydrolysis and promotes its binding to the 30S ribosomal subunits. Also involved in the hydrolysis of GTP during the formation of the 70S ribosomal complex. The polypeptide is Translation initiation factor IF-2 (Bordetella petrii (strain ATCC BAA-461 / DSM 12804 / CCUG 43448)).